A 71-amino-acid polypeptide reads, in one-letter code: Beta-defensin 9 (71 aa).

The N-terminal stretch at M1–G23 is a signal peptide. Disulfide bonds link C37/C66, C44/C59, and C49/C67.

Belongs to the beta-defensin family.

Its subcellular location is the secreted. Functionally, has antibacterial activity. The sequence is that of Beta-defensin 9 (Defb9) from Rattus norvegicus (Rat).